Here is a 226-residue protein sequence, read N- to C-terminus: Cytidylate kinase (226 aa).

11 to 19 is a binding site for ATP; the sequence is GPAAAGKST.

This sequence belongs to the cytidylate kinase family. Type 1 subfamily.

It localises to the cytoplasm. The catalysed reaction is CMP + ATP = CDP + ADP. It carries out the reaction dCMP + ATP = dCDP + ADP. In Bacillus licheniformis (strain ATCC 14580 / DSM 13 / JCM 2505 / CCUG 7422 / NBRC 12200 / NCIMB 9375 / NCTC 10341 / NRRL NRS-1264 / Gibson 46), this protein is Cytidylate kinase.